A 355-amino-acid chain; its full sequence is uncharacterized protein (355 aa).

A signal peptide spans 1–21 (MQKKVLFNDIVFVCFPITDNG). Residues Asn-20, Asn-78, Asn-87, Asn-156, Asn-159, and Asn-274 are each glycosylated (N-linked (GlcNAc...) asparagine; by host). The Virion surface segment spans residues 22-331 (SIIISDIGYS…SSTSFFSRYG (310 aa)). The segment at 288–317 (GSKSTPNGPNGPTPTPSNGPNGPTPVPGIP) is disordered. Pro residues predominate over residues 296–317 (PNGPTPTPSNGPNGPTPVPGIP). N-linked (GlcNAc...) asparagine; by host glycosylation occurs at Asn-320. A helical membrane pass occupies residues 332–352 (LWIIIAIILLIVIISAVGIYF). The Intravirion portion of the chain corresponds to 353-355 (YLR).

The protein localises to the host membrane. It localises to the virion. This is an uncharacterized protein from Acanthamoeba polyphaga mimivirus (APMV).